The chain runs to 55 residues: Large ribosomal subunit protein bL33 (55 aa).

It belongs to the bacterial ribosomal protein bL33 family.

The protein is Large ribosomal subunit protein bL33 of Bartonella bacilliformis (strain ATCC 35685 / KC583 / Herrer 020/F12,63).